Consider the following 376-residue polypeptide: D-alanine--D-alanine ligase (376 aa).

One can recognise an ATP-grasp domain in the interval 153 to 366 (KLLLAGQGLP…YPELVHRLIQ (214 aa)). 185-240 (VEALGYPVFVKPARAGSSIGITRVTSREGLAAAVAEAVSHDPKVVVEAALVGREIE) lines the ATP pocket. Mg(2+)-binding residues include aspartate 317, glutamate 333, and asparagine 335.

Belongs to the D-alanine--D-alanine ligase family. Mg(2+) is required as a cofactor. Requires Mn(2+) as cofactor.

Its subcellular location is the cytoplasm. The enzyme catalyses 2 D-alanine + ATP = D-alanyl-D-alanine + ADP + phosphate + H(+). The protein operates within cell wall biogenesis; peptidoglycan biosynthesis. Functionally, cell wall formation. In Kineococcus radiotolerans (strain ATCC BAA-149 / DSM 14245 / SRS30216), this protein is D-alanine--D-alanine ligase.